Here is a 192-residue protein sequence, read N- to C-terminus: GTP cyclohydrolase-2 (192 aa).

50-54 (RLHSE) provides a ligand contact to GTP. Residues Cys55, Cys66, and Cys68 each coordinate Zn(2+). GTP-binding positions include 92–94 (EGR) and Thr114. Asp126 serves as the catalytic Proton acceptor. The Nucleophile role is filled by Arg128. GTP-binding residues include Thr149 and Lys154.

This sequence belongs to the GTP cyclohydrolase II family. Zn(2+) serves as cofactor.

It carries out the reaction GTP + 4 H2O = 2,5-diamino-6-hydroxy-4-(5-phosphoribosylamino)-pyrimidine + formate + 2 phosphate + 3 H(+). It functions in the pathway cofactor biosynthesis; riboflavin biosynthesis; 5-amino-6-(D-ribitylamino)uracil from GTP: step 1/4. Its function is as follows. Catalyzes the conversion of GTP to 2,5-diamino-6-ribosylamino-4(3H)-pyrimidinone 5'-phosphate (DARP), formate and pyrophosphate. In Helicobacter pylori (strain P12), this protein is GTP cyclohydrolase-2.